A 213-amino-acid chain; its full sequence is Flagellin A1 (213 aa).

The propeptide occupies 1–10 (MFENINEDRG). N-linked (GlcNAc...) asparagine glycosylation is found at asparagine 70, asparagine 115, and asparagine 172.

It belongs to the archaeal flagellin family. Glycosylated by a pentasaccharide similar to the S-layer glycoprotein, probably comprising a hexose, 2 hexuronic acids, a methyl ester of a hexuronic acid and mannose. Glycosylation is required for biosynthesis of stable flagella.

It localises to the archaeal flagellum. Functionally, major flagellin required for motility. Not involved in PibD-dependent surface adhesion. Much more abundant in cells compared to FlgA2. This is Flagellin A1 (flgA1) from Haloferax volcanii (strain ATCC 29605 / DSM 3757 / JCM 8879 / NBRC 14742 / NCIMB 2012 / VKM B-1768 / DS2) (Halobacterium volcanii).